The following is a 301-amino-acid chain: Homoserine O-acetyltransferase (301 aa).

Cys-142 acts as the Acyl-thioester intermediate in catalysis. Residues Lys-163 and Ser-192 each coordinate substrate. The Proton acceptor role is filled by His-235. Glu-237 is a catalytic residue. Arg-249 is a substrate binding site.

The protein belongs to the MetA family.

It is found in the cytoplasm. The catalysed reaction is L-homoserine + acetyl-CoA = O-acetyl-L-homoserine + CoA. Its pathway is amino-acid biosynthesis; L-methionine biosynthesis via de novo pathway; O-acetyl-L-homoserine from L-homoserine: step 1/1. In terms of biological role, transfers an acetyl group from acetyl-CoA to L-homoserine, forming acetyl-L-homoserine. This is Homoserine O-acetyltransferase from Bacillus cereus (strain 03BB102).